Reading from the N-terminus, the 678-residue chain is MAAHHRQNTAGRRKVQVSYVIRDEVEKYNRNGVNALQLDPALNRLFTAGRDSIIRIWSVNQHKQDPYIASMEHHTDWVNDIVLCCNGKTLISASSDTTVKVWNAHKGFCMSTLRTHKDYVKALAYAKDKELVASAGLDRQIFLWDVNTLTALTASNNTVTTSSLSGNKDSIYSLAMNQMGTVIVSGSTEKVLRVWDPRTCAKLMKLKGHTDNVKALLLNRDGTQCLSGSSDGTIRLWSLGQQRCIATYRVHDEGVWALQVNEAFTHVYSGGRDRKIYCTDLRNPDIRVLICEEKAPVLKMELDRSADPPPAIWVATTKSSVNKWTLKGIHNFRASGDYDNDCTNPIPPLCTQPDQVIKGGASIIQCHILNDKRHILTKDTNNNVAYWDVLKACKVEDLGKVDFEEEIKKRFKMVYVPNWFSVDLKTGMLTITLDESDCFAAWVSAKDAGFSSPDGSDPKLNLGGLLLQALLEYWPRTHINPMDEEENEINHAVNGEQENRVQKGNGYFQVPPHTPVIFGEAGGRTLFRLLCRDSGGETESMLLNETVPQWVIDITVDKNMPKFNKIPFYLQPHSSSGAKTLKKDRLSASDMLQVRKVMEHVYEKIINLDNESQTTSSSNNEKAGEQEKEEDIAVLAEEKIELLCQDQVLDPNMDLRTVKHFIWKSGGDLTLHYRQKST.

WD repeat units follow at residues 28–67 (YNRNGVNALQLDPALNRLFTAGRDSIIRIWSVNQHKQDPY), 73–112 (HHTDWVNDIVLCCNGKTLISASSDTTVKVWNAHKGFCMST), 115–154 (THKDYVKALAYAKDKELVASAGLDRQIFLWDVNTLTALTA), 166–205 (GNKDSIYSLAMNQMGTVIVSGSTEKVLRVWDPRTCAKLMK), 208–247 (GHTDNVKALLLNRDGTQCLSGSSDGTIRLWSLGQQRCIAT), 250–289 (VHDEGVWALQVNEAFTHVYSGGRDRKIYCTDLRNPDIRVL), 292–334 (EEKA…NFRA), and 358–452 (KGGA…GFSS). The disordered stretch occupies residues 608 to 629 (LDNESQTTSSSNNEKAGEQEKE). Residues 610–621 (NESQTTSSSNNE) show a composition bias toward low complexity.

The protein belongs to the WD repeat WDR48 family.

It is found in the nucleus. The protein resides in the cytoplasm. It localises to the lysosome. Its subcellular location is the late endosome. Its function is as follows. Regulator of deubiquitinating complexes, which acts as a strong activator of USP1, USP12 and USP46. Enhances the USP1-mediated deubiquitination of FANCD2; USP1 being almost inactive by itself. Activates deubiquitination by increasing the catalytic turnover without increasing the affinity of deubiquitinating enzymes for the substrate. Also activates deubiquitinating activity of complexes containing USP12. Docks at the distal end of the USP12 fingers domain and induces a cascade of structural changes leading to the activation of the enzyme. Together with RAD51AP1, promotes DNA repair by stimulating RAD51-mediated homologous recombination. Binds single-stranded DNA (ssDNA) and double-stranded DNA (dsDNA). DNA-binding is required both for USP1-mediated deubiquitination of FANCD2 and stimulation of RAD51-mediated homologous recombination: both WDR48/UAF1 and RAD51AP1 have coordinated role in DNA-binding during these processes. Together with ATAD5 and by regulating USP1 activity, has a role in PCNA-mediated translesion synthesis (TLS) by deubiquitinating monoubiquitinated PCNA. Together with ATAD5, has a role in recruiting RAD51 to stalled forks during replication stress. This is WD repeat-containing protein 48 (WDR48) from Gallus gallus (Chicken).